Reading from the N-terminus, the 268-residue chain is Interleukin-1 alpha (268 aa).

Positions 1–112 are excised as a propeptide; that stretch reads MAKVPDLFED…DTEEEIIKPR (112 aa). The residue at position 82 (Lys-82) is an N6-acetyllysine. Residues 82-86 form a nuclear localization signal (NLS) region; the sequence is KKRRL. Ser-87 bears the Phosphoserine mark. N-linked (GlcNAc...) asparagine glycosylation is found at Asn-102 and Asn-141.

Belongs to the IL-1 family. As to quaternary structure, monomer. Interacts with TMED10; the interaction mediates the translocation from the cytoplasm into the ERGIC (endoplasmic reticulum-Golgi intermediate compartment) and thereby secretion. Interacts with IL1R1. Interacts with S100A13; this interaction is the first step in the export of IL1A, followed by direct translocation of this complex across the plasma membrane. Acetylated within its nuclear localization sequence, which impacts subcellular localization. Post-translationally, proteolytic processed by CAPN1 in a calcium-dependent manner. Cleavage from 31 kDa precursor to 18 kDa biologically active molecules. In terms of processing, phosphorylated. Phosphorylation greatly enhances susceptibility to digestion and promotes the conversion of pre-IL1A alpha to the biologically active IL1A.

It localises to the nucleus. The protein resides in the cytoplasm. The protein localises to the secreted. Functionally, cytokine constitutively present intracellularly in nearly all resting non-hematopoietic cells that plays an important role in inflammation and bridges the innate and adaptive immune systems. After binding to its receptor IL1R1 together with its accessory protein IL1RAP, forms the high affinity interleukin-1 receptor complex. Signaling involves the recruitment of adapter molecules such as MYD88, IRAK1 or IRAK4. In turn, mediates the activation of NF-kappa-B and the three MAPK pathways p38, p42/p44 and JNK pathways. Within the cell, acts as an alarmin and cell death results in its liberation in the extracellular space after disruption of the cell membrane to induce inflammation and alert the host to injury or damage. In addition to its role as a danger signal, which occurs when the cytokine is passively released by cell necrosis, directly senses DNA damage and acts as signal for genotoxic stress without loss of cell integrity. This chain is Interleukin-1 alpha (IL1A), found in Capra hircus (Goat).